A 100-amino-acid chain; its full sequence is Small ribosomal subunit protein uS14c (100 aa).

A disordered region spans residues 1–31 (MARKSLIQREKKRQKLEQKYHSIRRSSKKEI).

The protein belongs to the universal ribosomal protein uS14 family. As to quaternary structure, part of the 30S ribosomal subunit.

The protein resides in the plastid. The protein localises to the chloroplast. Its function is as follows. Binds 16S rRNA, required for the assembly of 30S particles. This chain is Small ribosomal subunit protein uS14c, found in Solanum bulbocastanum (Wild potato).